The following is a 1123-amino-acid chain: Ubiquitin carboxyl-terminal hydrolase 36 (1123 aa).

Basic and acidic residues-rich tracts occupy residues 1–19 (MPIV…KDSA) and 69–90 (GASR…EHTY). 2 disordered regions span residues 1-22 (MPIV…ADDG) and 67-95 (TEGA…SCGD). The USP domain occupies 122-423 (AGLHNLGNTC…QAYVLFYLRI (302 aa)). Cys131 (nucleophile) is an active-site residue. His382 functions as the Proton acceptor in the catalytic mechanism. Ser429 and Ser464 each carry phosphoserine. Residues 430 to 577 (PEGLISRTGS…RQGSWDSRDV (148 aa)) are disordered. Residues 491–503 (RNGSTLGLKSQNG) show a composition bias toward polar residues. A compositionally biased stretch (low complexity) spans 510 to 519 (PSGSPSPKLS). Ser546 bears the Phosphoserine mark. The segment covering 557-571 (SNSNSSRSGSQRQGS) has biased composition (low complexity). A Phosphoserine modification is found at Ser582. The disordered stretch occupies residues 589 to 999 (ATANGHGLKG…ESSSCAPSAN (411 aa)). Residues 597 to 609 (KGNDESAGLDRRG) show a composition bias toward basic and acidic residues. Residues 610-623 (SSSSSPEHSASSDS) show a composition bias toward low complexity. A compositionally biased stretch (polar residues) spans 640–654 (SQETNCSTAGHSKTP). The residue at position 667 (Ser667) is a Phosphoserine. A compositionally biased stretch (polar residues) spans 669–681 (VLSNTTTEPASTM). The residue at position 682 (Ser682) is a Phosphoserine. A compositionally biased stretch (low complexity) spans 687 to 697 (KKLALSAKKAS). Residues Ser713 and Ser742 each carry the phosphoserine modification. Positions 773–785 (EPRSCSSISTALP) are enriched in polar residues. Positions 841 to 850 (HGKRKRKKKK) are enriched in basic residues. The span at 891–902 (GTQPQVNGQQVG) shows a compositional bias: polar residues. Ser952 carries the phosphoserine modification. Positions 963 to 975 (QETQRAVEEDGHL) are enriched in basic and acidic residues.

It belongs to the peptidase C19 family. Interacts with isoform 3 of FBXW7; the interaction inhibits MYC degradation induced by SCF(FBW7) complex. Interacts with NTRK1; USP36 does not deubiquitinate NTRK1. Interacts with NEDD4L (via domains WW1, 3 and 4); the interaction inhibits ubiquitination of, at least, NTRK1, KCNQ2 and KCNQ3 by NEDD4L. Interacts (via C-terminus) with EXOSC10 (via C-terminus); the interaction is facilitated by the association with RNA and promotes sumoylation of EXOSC10. In terms of processing, polyubiquitinated by NEDD4L, no effect on USP36 protein levels. Both proteins interact with and regulate each other's ubiquitination levels. As to expression, broadly expressed.

The protein localises to the nucleus. Its subcellular location is the nucleolus. The protein resides in the cytoplasm. It carries out the reaction Thiol-dependent hydrolysis of ester, thioester, amide, peptide and isopeptide bonds formed by the C-terminal Gly of ubiquitin (a 76-residue protein attached to proteins as an intracellular targeting signal).. Deubiquitinase essential for the regulation of nucleolar structure and function. Required for cell and organism viability. Plays an important role in ribosomal RNA processing and protein synthesis, which is mediated, at least in part, through deubiquitination of DHX33, NPM1 and FBL, regulating their protein stability. Functions as a transcriptional repressor by deubiquiting histone H2B at the promoters of genes critical for cellular differentiation, such as CDKN1A, thereby preventing histone H3 'Lys-4' trimethylation (H3K4). Specifically deubiquitinates MYC in the nucleolus, leading to prevent MYC degradation by the proteasome: acts by specifically interacting with isoform 3 of FBXW7 (FBW7gamma) in the nucleolus and counteracting ubiquitination of MYC by the SCF(FBW7) complex. In contrast, it does not interact with isoform 1 of FBXW7 (FBW7alpha) in the nucleoplasm. Interacts to and regulates the actions of E3 ubiquitin-protein ligase NEDD4L over substrates such as NTRK1, KCNQ2 and KCNQ3, affecting their expression an functions. Deubiquitinates SOD2, regulates SOD2 protein stability. Deubiquitinase activity is required to control selective autophagy activation by ubiquitinated proteins. Promotes CEP63 stabilization through 'Lys-48'-linked deubiquitination leading to increased stability. Acts as a SUMO ligase to promote EXOSC10 sumoylation critical for the nucleolar RNA exosome function in rRNA processing. Binds to pre-rRNAs. The polypeptide is Ubiquitin carboxyl-terminal hydrolase 36 (Homo sapiens (Human)).